Here is a 124-residue protein sequence, read N- to C-terminus: Succinate dehydrogenase cytochrome b556 subunit (124 aa).

Residues 1-29 (MTKTKQEIYNKRPTSPHLSIYKLQISSTL) are Cytoplasmic-facing. The helical transmembrane segment at 30 to 55 (SILHRMTGVALFFAVSILAWWLILSK) threads the bilayer. The Periplasmic segment spans residues 56-67 (YDNNYLQFANCC). A helical transmembrane segment spans residues 68–88 (IIKICLVAVSYAWFYHLCNGI). A heme-binding site is contributed by His-83. The Cytoplasmic portion of the chain corresponds to 89–103 (RHLFWDIGYGFSIKA). Residues 104–124 (VNITGWCVVVCSILLTMLLWV) form a helical membrane-spanning segment.

The protein belongs to the cytochrome b560 family. As to quaternary structure, part of an enzyme complex containing four subunits: a flavoprotein, an iron-sulfur protein, plus two membrane-anchoring proteins, SdhC and SdhD. The complex can form homotrimers. It depends on heme as a cofactor.

The protein localises to the cell inner membrane. It participates in carbohydrate metabolism; tricarboxylic acid cycle. Its function is as follows. Membrane-anchoring subunit of succinate dehydrogenase (SDH). This Rickettsia felis (strain ATCC VR-1525 / URRWXCal2) (Rickettsia azadi) protein is Succinate dehydrogenase cytochrome b556 subunit (sdhC).